Here is an 801-residue protein sequence, read N- to C-terminus: Cation/H(+) antiporter 28 (801 aa).

Transmembrane regions (helical) follow at residues 24-44 (ALKI…HYLM), 77-97 (SITL…VMGL), 113-133 (FIAY…TPFL), 140-160 (PYIF…PILT), 179-199 (AAGV…FIFF), 216-236 (LLMF…SPIF), 252-272 (GSHL…PTWP), 275-292 (SMYN…FLPN), 304-324 (INYL…GFII), 343-363 (LLGT…LLLG), 371-391 (SLGL…ALAI), and 403-423 (LIIF…MDII).

It belongs to the monovalent cation:proton antiporter 2 (CPA2) transporter (TC 2.A.37) family. CHX (TC 2.A.37.4) subfamily. As to expression, specifically expressed in pollen.

It is found in the membrane. Its function is as follows. May operate as a cation/H(+) antiporter. This is Cation/H(+) antiporter 28 (CHX28) from Arabidopsis thaliana (Mouse-ear cress).